The following is a 351-amino-acid chain: Ribosomal RNA large subunit methyltransferase N (351 aa).

The active-site Proton acceptor is the E92. Residues G105–E337 form the Radical SAM core domain. C112 and C342 are disulfide-bonded. [4Fe-4S] cluster is bound by residues C119, C123, and C126. S-adenosyl-L-methionine-binding positions include G169 to E170, S201, S224 to H226, and N300. The active-site S-methylcysteine intermediate is C342.

The protein belongs to the radical SAM superfamily. RlmN family. [4Fe-4S] cluster serves as cofactor.

The protein localises to the cytoplasm. The enzyme catalyses adenosine(2503) in 23S rRNA + 2 reduced [2Fe-2S]-[ferredoxin] + 2 S-adenosyl-L-methionine = 2-methyladenosine(2503) in 23S rRNA + 5'-deoxyadenosine + L-methionine + 2 oxidized [2Fe-2S]-[ferredoxin] + S-adenosyl-L-homocysteine. In terms of biological role, specifically methylates position 2 of adenine 2503 in 23S rRNA. The protein is Ribosomal RNA large subunit methyltransferase N of Nitrosopumilus maritimus (strain SCM1).